The primary structure comprises 337 residues: Putative long-chain-alcohol O-fatty-acyltransferase 10 (337 aa).

8 consecutive transmembrane segments (helical) span residues 7–27, 38–58, 59–79, 82–102, 142–162, 228–248, 254–274, and 285–305; these read SFVK…YIPS, SVLP…FTIF, SSTT…LFAF, GPLL…CLPI, ILLL…LLTI, MGCM…YFYI, TLEV…EIAV, and MLLR…LFFG.

Belongs to the wax synthase family.

It is found in the membrane. The catalysed reaction is a long chain fatty alcohol + a fatty acyl-CoA = a wax ester + CoA. In terms of biological role, catalyzes the final step in the synthesis of long-chain linear esters (waxes). The protein is Putative long-chain-alcohol O-fatty-acyltransferase 10 of Arabidopsis thaliana (Mouse-ear cress).